The sequence spans 418 residues: Serine hydroxymethyltransferase (418 aa).

Residues Leu121 and 125–127 (GHL) contribute to the (6S)-5,6,7,8-tetrahydrofolate site. Lys230 is subject to N6-(pyridoxal phosphate)lysine. Residues Glu246 and 355–357 (SPF) each bind (6S)-5,6,7,8-tetrahydrofolate.

Belongs to the SHMT family. In terms of assembly, homodimer. The cofactor is pyridoxal 5'-phosphate.

Its subcellular location is the cytoplasm. It catalyses the reaction (6R)-5,10-methylene-5,6,7,8-tetrahydrofolate + glycine + H2O = (6S)-5,6,7,8-tetrahydrofolate + L-serine. The protein operates within one-carbon metabolism; tetrahydrofolate interconversion. It participates in amino-acid biosynthesis; glycine biosynthesis; glycine from L-serine: step 1/1. Catalyzes the reversible interconversion of serine and glycine with tetrahydrofolate (THF) serving as the one-carbon carrier. This reaction serves as the major source of one-carbon groups required for the biosynthesis of purines, thymidylate, methionine, and other important biomolecules. Also exhibits THF-independent aldolase activity toward beta-hydroxyamino acids, producing glycine and aldehydes, via a retro-aldol mechanism. This Streptococcus pneumoniae (strain 70585) protein is Serine hydroxymethyltransferase.